Reading from the N-terminus, the 236-residue chain is Leucyl/phenylalanyl-tRNA--protein transferase (236 aa).

It belongs to the L/F-transferase family.

Its subcellular location is the cytoplasm. The catalysed reaction is N-terminal L-lysyl-[protein] + L-leucyl-tRNA(Leu) = N-terminal L-leucyl-L-lysyl-[protein] + tRNA(Leu) + H(+). It carries out the reaction N-terminal L-arginyl-[protein] + L-leucyl-tRNA(Leu) = N-terminal L-leucyl-L-arginyl-[protein] + tRNA(Leu) + H(+). The enzyme catalyses L-phenylalanyl-tRNA(Phe) + an N-terminal L-alpha-aminoacyl-[protein] = an N-terminal L-phenylalanyl-L-alpha-aminoacyl-[protein] + tRNA(Phe). Functions in the N-end rule pathway of protein degradation where it conjugates Leu, Phe and, less efficiently, Met from aminoacyl-tRNAs to the N-termini of proteins containing an N-terminal arginine or lysine. The protein is Leucyl/phenylalanyl-tRNA--protein transferase of Shewanella pealeana (strain ATCC 700345 / ANG-SQ1).